Reading from the N-terminus, the 390-residue chain is Succinate--CoA ligase [ADP-forming] subunit beta (390 aa).

An ATP-grasp domain is found at 9 to 245 (KHLLKKYNIP…TTQEDEHETM (237 aa)). ATP contacts are provided by residues Lys-46, 53 to 55 (GRG), Glu-99, Ser-102, and Glu-107. Positions 200 and 214 each coordinate Mg(2+). Substrate is bound by residues Asn-265 and 322–324 (GIV).

It belongs to the succinate/malate CoA ligase beta subunit family. Heterotetramer of two alpha and two beta subunits. It depends on Mg(2+) as a cofactor.

It catalyses the reaction succinate + ATP + CoA = succinyl-CoA + ADP + phosphate. The catalysed reaction is GTP + succinate + CoA = succinyl-CoA + GDP + phosphate. It functions in the pathway carbohydrate metabolism; tricarboxylic acid cycle; succinate from succinyl-CoA (ligase route): step 1/1. In terms of biological role, succinyl-CoA synthetase functions in the citric acid cycle (TCA), coupling the hydrolysis of succinyl-CoA to the synthesis of either ATP or GTP and thus represents the only step of substrate-level phosphorylation in the TCA. The beta subunit provides nucleotide specificity of the enzyme and binds the substrate succinate, while the binding sites for coenzyme A and phosphate are found in the alpha subunit. In Coxiella burnetii (strain RSA 331 / Henzerling II), this protein is Succinate--CoA ligase [ADP-forming] subunit beta.